A 507-amino-acid polypeptide reads, in one-letter code: Subtilisin-like protease 1 (507 aa).

The signal sequence occupies residues 1–19 (MGVFRFISISLAAVSAANA). A propeptide spanning residues 20–116 (AQILSMPHAQ…VEPDTIISVN (97 aa)) is cleaved from the precursor. The region spanning 34–113 (SYIVMMKDDT…VMFVEPDTII (80 aa)) is the Inhibitor I9 domain. In terms of domain architecture, Peptidase S8 spans 126 to 400 (SWGLARISNS…NVLISNGGAK (275 aa)). Catalysis depends on charge relay system residues Asp-158 and His-190. A disordered region spans residues 175 to 198 (GSNQVNDGDDRDGSGHGTHTSGTM). Asn-251 is a glycosylation site (N-linked (GlcNAc...) asparagine). Residues 282 to 294 (NENQDARSSSPAS) are compositionally biased toward polar residues. The disordered stretch occupies residues 282–312 (NENQDARSSSPASEPSVCTVGSSAEDDSRSS). Ser-345 functions as the Charge relay system in the catalytic mechanism. Positions 378–394 (SSSITDVGPGTPTNVLI) are enriched in polar residues. The disordered stretch occupies residues 378–486 (SSSITDVGPG…YPGGDNFDFD (109 aa)). 2 stretches are compositionally biased toward pro residues: residues 405-428 (KPAPGPSPNPSQPSEPQQPAPSQP) and 438-449 (EPFPGEPFPGEP). Positions 450 to 461 (FPGESSPGESAP) are enriched in low complexity. Positions 462-476 (APAPMPPSPQHPHTP) are enriched in pro residues.

The protein belongs to the peptidase S8 family.

The protein localises to the secreted. In terms of biological role, secreted subtilisin-like serine protease with keratinolytic activity that contributes to pathogenicity. This is Subtilisin-like protease 1 (SUB1) from Trichophyton equinum (Horse ringworm fungus).